Reading from the N-terminus, the 1057-residue chain is Exportin-1 (1057 aa).

An Importin N-terminal domain is found at Ala36–Arg102. 11 HEAT repeats span residues Ala239 to Gly275, Ala281 to Thr321, Asn462 to Lys501, Arg506 to Arg544, Lys551 to Arg588, Glu596 to Ala633, Lys739 to Thr776, Thr781 to Ser818, Gln855 to Lys892, Lys902 to Phe925, and Ala926 to Glu965.

The protein belongs to the exportin family. As to quaternary structure, component of a nuclear export receptor complex.

It localises to the nucleus. It is found in the cytoplasm. The protein resides in the perinuclear region. In terms of biological role, mediates the nuclear export of cellular proteins (cargos) bearing a leucine-rich nuclear export signal (NES). This Dictyostelium discoideum (Social amoeba) protein is Exportin-1 (xpo1).